A 293-amino-acid chain; its full sequence is HTH-type transcriptional regulator ArgP (293 aa).

The HTH lysR-type domain maps to 4–60; that stretch reads PDYRTLQALDAVIRERGFERAAQKLCITQSAVSQRIKQLENLFGQPLLVRTIPPHPT. Positions 21 to 40 form a DNA-binding region, H-T-H motif; the sequence is FERAAQKLCITQSAVSQRIK.

Belongs to the LysR transcriptional regulatory family. Homodimer.

Its function is as follows. Controls the transcription of genes involved in arginine and lysine metabolism. The chain is HTH-type transcriptional regulator ArgP from Sodalis glossinidius (strain morsitans).